The chain runs to 71 residues: uncharacterized protein (71 aa).

It localises to the plastid. The protein resides in the chloroplast. This is an uncharacterized protein from Mesostigma viride (Green alga).